A 28-amino-acid chain; its full sequence is Short cationic peptide-1a (28 aa).

Glu-28 is subject to Glutamic acid 1-amide.

In terms of tissue distribution, expressed by the venom gland.

It is found in the secreted. The sequence is that of Short cationic peptide-1a from Cupiennius salei (American wandering spider).